Reading from the N-terminus, the 726-residue chain is Catalase-peroxidase 1 (726 aa).

Residues 1-33 are disordered; sequence MSTSDDIHNTTATGKCPFHQGGHDQSAGAGTTT. A cross-link (tryptophyl-tyrosyl-methioninium (Trp-Tyr) (with M-252)) is located at residues 105-226; that stretch reads WHGAGTYRSI…LGATEMGLIY (122 aa). Histidine 106 acts as the Proton acceptor in catalysis. The tryptophyl-tyrosyl-methioninium (Tyr-Met) (with W-105) cross-link spans 226–252; the sequence is YVNPEGPDHSGEPLSAAAAIRATFGNM. Residue histidine 267 participates in heme b binding.

It belongs to the peroxidase family. Peroxidase/catalase subfamily. As to quaternary structure, homodimer or homotetramer. It depends on heme b as a cofactor. Post-translationally, formation of the three residue Trp-Tyr-Met cross-link is important for the catalase, but not the peroxidase activity of the enzyme.

It carries out the reaction H2O2 + AH2 = A + 2 H2O. The catalysed reaction is 2 H2O2 = O2 + 2 H2O. Bifunctional enzyme with both catalase and broad-spectrum peroxidase activity. The protein is Catalase-peroxidase 1 of Escherichia coli O157:H7.